Here is a 414-residue protein sequence, read N- to C-terminus: Histidine--tRNA ligase (414 aa).

This sequence belongs to the class-II aminoacyl-tRNA synthetase family. In terms of assembly, homodimer.

The protein localises to the cytoplasm. The enzyme catalyses tRNA(His) + L-histidine + ATP = L-histidyl-tRNA(His) + AMP + diphosphate + H(+). In Ehrlichia ruminantium (strain Gardel), this protein is Histidine--tRNA ligase.